The sequence spans 295 residues: Diaminopimelate epimerase (295 aa).

Residues Asn-11 and Asn-67 each contribute to the substrate site. The active-site Proton donor is the Cys-76. Residues 77-78, Asn-171, Asn-210, and 228-229 contribute to the substrate site; these read GN and ER. Catalysis depends on Cys-237, which acts as the Proton acceptor. Position 238–239 (238–239) interacts with substrate; that stretch reads GT.

It belongs to the diaminopimelate epimerase family. In terms of assembly, homodimer.

The protein localises to the cytoplasm. It carries out the reaction (2S,6S)-2,6-diaminopimelate = meso-2,6-diaminopimelate. Its pathway is amino-acid biosynthesis; L-lysine biosynthesis via DAP pathway; DL-2,6-diaminopimelate from LL-2,6-diaminopimelate: step 1/1. Functionally, catalyzes the stereoinversion of LL-2,6-diaminopimelate (L,L-DAP) to meso-diaminopimelate (meso-DAP), a precursor of L-lysine. The polypeptide is Diaminopimelate epimerase (Methanocaldococcus jannaschii (strain ATCC 43067 / DSM 2661 / JAL-1 / JCM 10045 / NBRC 100440) (Methanococcus jannaschii)).